The primary structure comprises 347 residues: Probable dual-specificity RNA methyltransferase RlmN (347 aa).

The active-site Proton acceptor is the Glu94. In terms of domain architecture, Radical SAM core spans 100 to 319 (YPSRTIACIS…LDTLVKNGID (220 aa)). Residues Cys107 and Cys334 are joined by a disulfide bond. Positions 114, 118, and 121 each coordinate [4Fe-4S] cluster. S-adenosyl-L-methionine-binding positions include 161-162 (GE), Ser193, 216-218 (SLH), and Asn292. Cys334 serves as the catalytic S-methylcysteine intermediate.

It belongs to the radical SAM superfamily. RlmN family. Requires [4Fe-4S] cluster as cofactor.

The protein localises to the cytoplasm. The catalysed reaction is adenosine(2503) in 23S rRNA + 2 reduced [2Fe-2S]-[ferredoxin] + 2 S-adenosyl-L-methionine = 2-methyladenosine(2503) in 23S rRNA + 5'-deoxyadenosine + L-methionine + 2 oxidized [2Fe-2S]-[ferredoxin] + S-adenosyl-L-homocysteine. It carries out the reaction adenosine(37) in tRNA + 2 reduced [2Fe-2S]-[ferredoxin] + 2 S-adenosyl-L-methionine = 2-methyladenosine(37) in tRNA + 5'-deoxyadenosine + L-methionine + 2 oxidized [2Fe-2S]-[ferredoxin] + S-adenosyl-L-homocysteine. Its function is as follows. Specifically methylates position 2 of adenine 2503 in 23S rRNA and position 2 of adenine 37 in tRNAs. This Petrotoga mobilis (strain DSM 10674 / SJ95) protein is Probable dual-specificity RNA methyltransferase RlmN.